The chain runs to 744 residues: Probable methylmalonyl-CoA mutase, mitochondrial (744 aa).

Positions 605-737 (QPRIMVAKMG…EKLEANLPEA (133 aa)) constitute a B12-binding domain. His618 provides a ligand contact to adenosylcob(III)alamin.

Belongs to the methylmalonyl-CoA mutase family. In terms of assembly, homodimer. Requires adenosylcob(III)alamin as cofactor.

It localises to the mitochondrion matrix. The enzyme catalyses (R)-methylmalonyl-CoA = succinyl-CoA. Its function is as follows. Involved, in man, in the degradation of several amino acids, odd-chain fatty acids and cholesterol via propionyl-CoA to the tricarboxylic acid cycle. MCM has different functions in other species. This chain is Probable methylmalonyl-CoA mutase, mitochondrial (mmcm-1), found in Caenorhabditis elegans.